Here is a 505-residue protein sequence, read N- to C-terminus: Ribose import ATP-binding protein RbsA 2 (505 aa).

ABC transporter domains lie at Leu-13–Asp-249 and Val-259–Ala-503. Gly-45–Ser-52 contributes to the ATP binding site.

Belongs to the ABC transporter superfamily. Ribose importer (TC 3.A.1.2.1) family. The complex is composed of an ATP-binding protein (RbsA), two transmembrane proteins (RbsC) and a solute-binding protein (RbsB).

The protein resides in the cell membrane. The enzyme catalyses D-ribose(out) + ATP + H2O = D-ribose(in) + ADP + phosphate + H(+). In terms of biological role, part of the ABC transporter complex RbsABC involved in ribose import. Responsible for energy coupling to the transport system. The sequence is that of Ribose import ATP-binding protein RbsA 2 from Streptomyces avermitilis (strain ATCC 31267 / DSM 46492 / JCM 5070 / NBRC 14893 / NCIMB 12804 / NRRL 8165 / MA-4680).